Here is a 231-residue protein sequence, read N- to C-terminus: Killer cell lectin-like receptor subfamily F member 1 (231 aa).

The Cytoplasmic segment spans residues 1–38; the sequence is MQDEERYMTLNVQSKKRSSAQTSQLTFKDYSVTLHWYK. The residue at position 7 (Tyr-7) is a Phosphotyrosine. The helical; Signal-anchor for type II membrane protein transmembrane segment at 39–59 threads the bilayer; it reads ILLGISGTVNGILTLTLISLI. Residues 60–231 are Extracellular-facing; it reads LLVSQGVLLK…SSVFKWICQY (172 aa). N-linked (GlcNAc...) asparagine glycosylation is found at Asn-77, Asn-91, Asn-96, and Asn-176. In terms of domain architecture, C-type lectin spans 121–230; that stretch reads YQGKCYWFSN…CSSVFKWICQ (110 aa). Intrachain disulfides connect Cys-142–Cys-229 and Cys-208–Cys-221.

As to quaternary structure, homodimer. Interacts with CLEC2B. Post-translationally, phosphorylated on Tyr-7; this phosphorylation is required for NKp80/KLRF1-mediated cytotoxicity. In terms of tissue distribution, strongly expressed in peripheral blood leukocytes and spleen, with weaker expression in lymph node and adult liver, and no expression detected in bone marrow, thymus, and fetal liver. Not expressed in brain, heart, placenta, lung, kidney, skeletal muscle, and pancreas. Within peripheral blood leukocyte and immunocyte cell lines, expression was predominant in NK cells but was also detected in monocytes.

It localises to the membrane. In terms of biological role, functions as an activating receptor involved in immunosurveillance upon binding to various ligands displayed at the surface of myeloid cells. Upon interaction with CLEC2B ligand, stimulates NK-cell cytotoxicity and cytokine production leading to the cytolysis of malignant CLEC2B-expressing myeloid cells. Actviation of the common cytotoxicity pathway involves SRC and SYK kinases. This chain is Killer cell lectin-like receptor subfamily F member 1 (KLRF1), found in Homo sapiens (Human).